The sequence spans 310 residues: uncharacterized protein (310 aa).

In terms of domain architecture, HTH lysR-type spans 5–62; sequence FTEENLLAFTTAARFGSFSKAAEELGLTTSAISYTIKRMETGLDVVLFTRSTRSIELT. Positions 22-42 form a DNA-binding region, H-T-H motif; the sequence is FSKAAEELGLTTSAISYTIKR.

Belongs to the LysR transcriptional regulatory family.

This is an uncharacterized protein from Escherichia coli (strain K12).